The primary structure comprises 390 residues: 4-hydroxycoumarin synthase 1 (390 aa).

Cys-161 is a catalytic residue.

Belongs to the thiolase-like superfamily. Chalcone/stilbene synthases family. Homodimer.

The catalysed reaction is 2-hydroxybenzoyl-CoA + malonyl-CoA = 4-hydroxycoumarin + CO2 + 2 CoA. In terms of biological role, type III polyketide synthase involved preferentially in the biosynthesis of 4-hydroxycoumarin from salicoyl-CoA. Can also use benzoyl-CoA and malonyl-CoA to produce 3,5-dihydroxybiphenyl as a major product and benzoyldiacetic acid lactone as a minor side product. Can also use m-hydroxybenzoyl-CoA as substrate, producing m-hydroxybenzoyl diacetic acid lactone as a derailment product. No activity with p-hydroxybenzoyl-CoA, CoA-linked cinnamic acids or acetyl-CoA. The chain is 4-hydroxycoumarin synthase 1 (BIS2) from Sorbus aucuparia (European mountain ash).